A 143-amino-acid chain; its full sequence is Putative pre-16S rRNA nuclease (143 aa).

Belongs to the YqgF nuclease family.

It localises to the cytoplasm. In terms of biological role, could be a nuclease involved in processing of the 5'-end of pre-16S rRNA. The polypeptide is Putative pre-16S rRNA nuclease (Leuconostoc mesenteroides subsp. mesenteroides (strain ATCC 8293 / DSM 20343 / BCRC 11652 / CCM 1803 / JCM 6124 / NCDO 523 / NBRC 100496 / NCIMB 8023 / NCTC 12954 / NRRL B-1118 / 37Y)).